Here is a 255-residue protein sequence, read N- to C-terminus: Putative glutamine amidotransferase YafJ (255 aa).

Cys-2 (for GATase activity) is an active-site residue. Positions 2 to 251 (CELLGMSANV…PGEWRLFCLG (250 aa)) constitute a Glutamine amidotransferase type-2 domain.

This Escherichia coli (strain K12) protein is Putative glutamine amidotransferase YafJ (yafJ).